The following is a 318-amino-acid chain: Methionyl-tRNA formyltransferase (318 aa).

Residue 117–120 (SLLP) participates in (6S)-5,6,7,8-tetrahydrofolate binding.

This sequence belongs to the Fmt family.

The enzyme catalyses L-methionyl-tRNA(fMet) + (6R)-10-formyltetrahydrofolate = N-formyl-L-methionyl-tRNA(fMet) + (6S)-5,6,7,8-tetrahydrofolate + H(+). Its function is as follows. Attaches a formyl group to the free amino group of methionyl-tRNA(fMet). The formyl group appears to play a dual role in the initiator identity of N-formylmethionyl-tRNA by promoting its recognition by IF2 and preventing the misappropriation of this tRNA by the elongation apparatus. The protein is Methionyl-tRNA formyltransferase of Malacoplasma penetrans (strain HF-2) (Mycoplasma penetrans).